Reading from the N-terminus, the 22-residue chain is CVPKRKVSPSXRNMRXAHDXLT.

The tract at residues 1 to 22 is disordered; sequence CVPKRKVSPSXRNMRXAHDXLT.

It belongs to the bacterial ribosomal protein bL32 family.

The chain is Large ribosomal subunit protein bL32 (rpmF) from Brevundimonas vesicularis (Pseudomonas vesicularis).